The primary structure comprises 955 residues: Translation initiation factor IF-2 (955 aa).

The tract at residues 49–352 (AFSQSSESTE…QAPSFGGVKI (304 aa)) is disordered. Residues 77–88 (PQQQTKASAPSA) are compositionally biased toward low complexity. Composition is skewed to pro residues over residues 95 to 121 (PAVPKPGPGLKPGPRPVPKPGPRPGPR), 149 to 159 (RPVPKPGPRPG), 188 to 202 (RPGPRPHPGMMPPRP), and 209 to 223 (PPRPQAPRPQAPRPG). Residues 225–235 (GTAGGRPGSSA) show a composition bias toward gly residues. Over residues 238-264 (PPRPVPRPGPRPSPMNMPASRPTPPGG) the composition is skewed to pro residues. Residues 273-322 (SGGGRGRGGGGGAGPRGGGAGGGAPRTGFGGRPGGGRGRGGTAGAFGRPG) are compositionally biased toward gly residues. Residues 326–335 (SRSRKSKKQR) are compositionally biased toward basic residues. Residues 448–620 (PRAPVVTVMG…IILTADAELD (173 aa)) enclose the tr-type G domain. The interval 457 to 464 (GHVDHGKT) is G1. GTP is bound at residue 457–464 (GHVDHGKT). The G2 stretch occupies residues 482-486 (GITQH). The G3 stretch occupies residues 507-510 (DTPG). GTP is bound by residues 507–511 (DTPGH) and 561–564 (NKID). Residues 561–564 (NKID) are G4. A G5 region spans residues 597-599 (SAK).

This sequence belongs to the TRAFAC class translation factor GTPase superfamily. Classic translation factor GTPase family. IF-2 subfamily.

The protein resides in the cytoplasm. In terms of biological role, one of the essential components for the initiation of protein synthesis. Protects formylmethionyl-tRNA from spontaneous hydrolysis and promotes its binding to the 30S ribosomal subunits. Also involved in the hydrolysis of GTP during the formation of the 70S ribosomal complex. The sequence is that of Translation initiation factor IF-2 from Thermobifida fusca (strain YX).